We begin with the raw amino-acid sequence, 124 residues long: Small ribosomal subunit protein uS12 (124 aa).

Positions 1-32 are disordered; sequence MPTIQQLVRKGRQAKASKTKTPALKGSPQRRG. Basic residues predominate over residues 9-18; it reads RKGRQAKASK. D89 carries the 3-methylthioaspartic acid modification.

The protein belongs to the universal ribosomal protein uS12 family. As to quaternary structure, part of the 30S ribosomal subunit. Contacts proteins S8 and S17. May interact with IF1 in the 30S initiation complex.

Functionally, with S4 and S5 plays an important role in translational accuracy. In terms of biological role, interacts with and stabilizes bases of the 16S rRNA that are involved in tRNA selection in the A site and with the mRNA backbone. Located at the interface of the 30S and 50S subunits, it traverses the body of the 30S subunit contacting proteins on the other side and probably holding the rRNA structure together. The combined cluster of proteins S8, S12 and S17 appears to hold together the shoulder and platform of the 30S subunit. This is Small ribosomal subunit protein uS12 from Acidothermus cellulolyticus (strain ATCC 43068 / DSM 8971 / 11B).